A 60-amino-acid chain; its full sequence is uncharacterized protein (60 aa).

A helical transmembrane segment spans residues Phe33–Leu55.

Belongs to the HHV-5 UL2 protein family.

It is found in the host membrane. This is an uncharacterized protein from Human cytomegalovirus (strain AD169) (HHV-5).